The following is a 216-amino-acid chain: MTIRNYNYHMTHFVISAPDIRHLPRDEGIEVAFAGRSNAGKSSALNTLTNQKGLARTSKTPGRTQLINLFEVVDGVRLVDLPGYGYAEVPEEMKLKWQRALGEYLQKRNCLKGLVVLMDIRHPLKDLDQQMITWAVAVGTPVLLLLTKADKLASGACKAQLNLVREAIIPFMGDIQVEAFSSLKKIGVDKLREKLDTWFSEIPPEVMAEEFDGEGE.

In terms of domain architecture, EngB-type G spans glutamate 27 to glutamate 201. GTP is bound by residues glycine 35 to serine 42, glycine 62 to leucine 66, aspartate 80 to glycine 83, threonine 147 to aspartate 150, and phenylalanine 180 to serine 182. 2 residues coordinate Mg(2+): serine 42 and threonine 64.

The protein belongs to the TRAFAC class TrmE-Era-EngA-EngB-Septin-like GTPase superfamily. EngB GTPase family. Mg(2+) serves as cofactor.

Functionally, necessary for normal cell division and for the maintenance of normal septation. In Yersinia pestis bv. Antiqua (strain Angola), this protein is Probable GTP-binding protein EngB.